The sequence spans 136 residues: Snaclec rhodocytin subunit alpha (136 aa).

3 cysteine pairs are disulfide-bonded: Cys5–Cys16, Cys33–Cys131, and Cys106–Cys123. Residues 12-132 (YDQHCYQAFN…CEQMHAFVCK (121 aa)) form the C-type lectin domain.

This sequence belongs to the snaclec family. In terms of assembly, dimer (non-covalently linked) of heterodimers of subunits alpha and beta (disulfide-linked). Expressed by the venom gland.

The protein localises to the secreted. Its function is as follows. Elicits platelet aggregation by the binding to the C-type lectin domain family 1 member B (CLEC1B/CLEC2). Binding leads to tyrosine phosphorylation in the cytoplasmic tail of CLEC1B, which promotes the binding of spleen tyrosine kinase (Syk), subsequent activation of PLC-gamma-2, and platelet activation and aggregation. Binding to GPIbalpha (GP1BA) and alpha-2/beta-1 (ITGA2/ITGB1) may also induce aggregation, but this is controversial. The protein is Snaclec rhodocytin subunit alpha of Calloselasma rhodostoma (Malayan pit viper).